Here is a 263-residue protein sequence, read N- to C-terminus: HTH-type transcriptional repressor NanR (263 aa).

Residues 30-98 (KKLSEMVEEE…NGERARVSRP (69 aa)) form the HTH gntR-type domain. The segment at residues 58–77 (ERELMAFFNVGRPSVREALA) is a DNA-binding region (H-T-H motif).

This sequence belongs to the NanR family.

Its function is as follows. Transcriptional repressor that controls expression of the genes required for the catabolism of sialic acids. The chain is HTH-type transcriptional repressor NanR from Salmonella bongori (strain ATCC 43975 / DSM 13772 / NCTC 12419).